Here is a 426-residue protein sequence, read N- to C-terminus: Serine--tRNA ligase (426 aa).

231-233 (TSE) provides a ligand contact to L-serine. 262 to 264 (RSE) is an ATP binding site. E285 contributes to the L-serine binding site. 349–352 (EISS) contacts ATP. S385 is an L-serine binding site.

The protein belongs to the class-II aminoacyl-tRNA synthetase family. Type-1 seryl-tRNA synthetase subfamily. As to quaternary structure, homodimer. The tRNA molecule binds across the dimer.

The protein resides in the cytoplasm. The enzyme catalyses tRNA(Ser) + L-serine + ATP = L-seryl-tRNA(Ser) + AMP + diphosphate + H(+). It carries out the reaction tRNA(Sec) + L-serine + ATP = L-seryl-tRNA(Sec) + AMP + diphosphate + H(+). It participates in aminoacyl-tRNA biosynthesis; selenocysteinyl-tRNA(Sec) biosynthesis; L-seryl-tRNA(Sec) from L-serine and tRNA(Sec): step 1/1. Functionally, catalyzes the attachment of serine to tRNA(Ser). Is also able to aminoacylate tRNA(Sec) with serine, to form the misacylated tRNA L-seryl-tRNA(Sec), which will be further converted into selenocysteinyl-tRNA(Sec). The polypeptide is Serine--tRNA ligase (Legionella pneumophila subsp. pneumophila (strain Philadelphia 1 / ATCC 33152 / DSM 7513)).